Reading from the N-terminus, the 366-residue chain is Di-N-acetylchitobiase (366 aa).

The first 22 residues, 1–22 (MALCGLPEFTLLLLPLLARLSA), serve as a signal peptide directing secretion. The region spanning 23–366 (GDCPCSEAAL…EMWGALKPRL (344 aa)) is the GH18 domain. Glu-127 serves as the catalytic Proton donor. Asn-131, Asn-177, Asn-212, Asn-246, and Asn-283 each carry an N-linked (GlcNAc...) asparagine glycan.

The protein belongs to the glycosyl hydrolase 18 family.

Its subcellular location is the lysosome. Involved in the degradation of asparagine-linked glycoproteins. Hydrolyze of N-acetyl-beta-D-glucosamine (1-4)N-acetylglucosamine chitobiose core from the reducing end of the bond, it requires prior cleavage by glycosylasparaginase. In Mus musculus (Mouse), this protein is Di-N-acetylchitobiase (Ctbs).